We begin with the raw amino-acid sequence, 249 residues long: tRNA pseudouridine synthase A (249 aa).

Catalysis depends on D53, which acts as the Nucleophile. Position 111 (Y111) interacts with substrate.

It belongs to the tRNA pseudouridine synthase TruA family. As to quaternary structure, homodimer.

It catalyses the reaction uridine(38/39/40) in tRNA = pseudouridine(38/39/40) in tRNA. Its function is as follows. Formation of pseudouridine at positions 38, 39 and 40 in the anticodon stem and loop of transfer RNAs. The chain is tRNA pseudouridine synthase A from Streptococcus sanguinis (strain SK36).